A 496-amino-acid polypeptide reads, in one-letter code: MFRSKRSGLVRRLWRSRVVPDREEGGSGGGGGGDEDGSLGSRAEPAPRAREGGGCGRSEVRPVAPRRPRDAVGQRGAQGAGRRRRAGGPPRPMSEPGAGAGSSLLDVAEPGGPGWLPESDCETVTCCLFSERDAAGAPRDASDPLAGAALEPAGGGRSREARSRLLLLEQELKTVTYSLLKRLKERSLDTLLEAVESRGGVPGGCVLVPRADLRLGGQPAPPQLLLGRLFRWPDLQHAVELKPLCGCHSFAAAADGPTVCCNPYHFSRLCGPESPPPPYSRLSPRDEYKPLDLSDSTLSYTETEATNSLITAPGEFSDASMSPDATKPSHWCSVAYWEHRTRVGRLYAVYDQAVSIFYDLPQGSGFCLGQLNLEQRSESVRRTRSKIGFGILLSKEPDGVWAYNRGEHPIFVNSPTLDAPGGRALVVRKVPPGYSIKVFDFERSGLQHAPEPDAADGPYDPNSVRISFAKGWGPCYSRQFITSCPCWLEILLNNPR.

Basic residues predominate over residues 1-15 (MFRSKRSGLVRRLWR). Disordered stretches follow at residues 1–116 (MFRS…PGWL) and 136–156 (GAPR…AGGG). Dimethylated arginine; alternate is present on residues Arg-75 and Arg-82. Residues Arg-75 and Arg-82 each carry the omega-N-methylarginine; alternate modification. The region spanning 148–275 (AALEPAGGGR…FSRLCGPESP (128 aa)) is the MH1 domain. A Glycyl lysine isopeptide (Lys-Gly) (interchain with G-Cter in ubiquitin) cross-link involves residue Lys-173. Positions 205, 247, 260, and 265 each coordinate Zn(2+). Residues 331-496 (WCSVAYWEHR…WLEILLNNPR (166 aa)) enclose the MH2 domain. The residue at position 435 (Ser-435) is a Phosphoserine; by PRKX; in vitro.

The protein belongs to the dwarfin/SMAD family. As to quaternary structure, interacts with NEDD4L. Interacts with WWP1. Interacts with STAMBP and PRKX. Interacts with RNF111 and AXIN1. Interacts with TGF-beta type I receptor superfamily members, including ACVR1B, BMPR1B and TGFBR1. In response to BMP2, but not to TGFB treatment, interacts with SMAD1, but not with SMAD2, nor with SMAD4; this interaction may inhibit SMAD1 binding to SMAD4. Interacts with HOXC8 and HOXC9. Interacts with PELI1; this interaction interferes with PELI1 complex formation with TRAF6, IRAK1, IRAK4 and MYD88 in response to IL1B and hence negatively regulates IL1R-TLR signaling. Interacts with TSC22D1/TSC-22. In terms of processing, phosphorylated by BMP type 1 receptor kinase and by PRKX. Post-translationally, monoubiquitinated at Lys-173 by the E2/E3 hybrid ubiquitin-protein ligase UBE2O, leading to reduced binding affinity for the activated BMP type I receptor ACVR1/ALK2, thereby enhancing BMP7 and regulating adipocyte differentiation. Ubiquitinated by WWP1. Ubiquitinated by ARK2C, promoting proteasomal degradation, leading to enhance the BMP-Smad signaling. Arginine methylation by PRMT1, which is recruited by BMPR2, initiates BMP-Induced signaling and induces dissociation from the BMPR1B receptor at the cell surface leading to derepress downstream Smad1/Smad5 signaling. Expressed in the brain, heart, ovary, peripheral blood leukocytes, small intestine, spleen, thymus, bone marrow, fetal liver and lymph nodes.

The protein resides in the nucleus. Functionally, transforming growth factor-beta superfamily receptors signaling occurs through the Smad family of intracellular mediators. SMAD6 is an inhibitory Smad (i-Smad) that negatively regulates signaling downstream of type I transforming growth factor-beta. Acts as a mediator of TGF-beta and BMP anti-inflammatory activities. Suppresses IL1R-TLR signaling through its direct interaction with PEL1, preventing NF-kappa-B activation, nuclear transport and NF-kappa-B-mediated expression of pro-inflammatory genes. Blocks the BMP-SMAD1 signaling pathway by competing with SMAD4 for receptor-activated SMAD1-binding. Binds to regulatory elements in target promoter regions. The polypeptide is Mothers against decapentaplegic homolog 6 (SMAD6) (Homo sapiens (Human)).